A 253-amino-acid chain; its full sequence is ATP synthase subunit a (253 aa).

6 consecutive transmembrane segments (helical) span residues 27-47 (ISFTNASGFMLLGVVLVIGFF), 87-107 (FFPFVFTLFFFILFANLIGMV), 117-137 (IIVTGALAMTVILMVIVVGLI), 146-166 (LFAPSGAPLPIYIILTPIEII), 196-216 (FTVMLIGAGAIYIPVAALAFA), and 224-244 (LEFLVAGLQAYVFAILTCVYL).

Belongs to the ATPase A chain family. F-type ATPases have 2 components, CF(1) - the catalytic core - and CF(0) - the membrane proton channel. CF(1) has five subunits: alpha(3), beta(3), gamma(1), delta(1), epsilon(1). CF(0) has three main subunits: a(1), b(2) and c(9-12). The alpha and beta chains form an alternating ring which encloses part of the gamma chain. CF(1) is attached to CF(0) by a central stalk formed by the gamma and epsilon chains, while a peripheral stalk is formed by the delta and b chains.

It is found in the cell inner membrane. Functionally, key component of the proton channel; it plays a direct role in the translocation of protons across the membrane. The chain is ATP synthase subunit a from Hyphomonas neptunium (strain ATCC 15444).